The sequence spans 246 residues: Putative outer membrane protein YiaT (246 aa).

A signal peptide spans 1–21 (MLINRNIVALFALPFMASATA).

It belongs to the MipA/OmpV family.

The protein localises to the cell outer membrane. The sequence is that of Putative outer membrane protein YiaT (yiaT) from Escherichia coli O157:H7.